A 340-amino-acid chain; its full sequence is Farnesyl pyrophosphate synthase 1 (340 aa).

3 residues coordinate isopentenyl diphosphate: Lys47, Arg50, and Gln85. Positions 92 and 96 each coordinate Mg(2+). Arg101 lines the dimethylallyl diphosphate pocket. An isopentenyl diphosphate-binding site is contributed by Arg102. Positions 188, 189, 227, 244, and 253 each coordinate dimethylallyl diphosphate.

It belongs to the FPP/GGPP synthase family. Mg(2+) serves as cofactor. In terms of tissue distribution, mainly expressed in trichomes and flowers, and, to a lower extent, in leaves, roots and stems.

It localises to the cytoplasm. It is found in the nucleus. It carries out the reaction isopentenyl diphosphate + dimethylallyl diphosphate = (2E)-geranyl diphosphate + diphosphate. The catalysed reaction is isopentenyl diphosphate + (2E)-geranyl diphosphate = (2E,6E)-farnesyl diphosphate + diphosphate. It functions in the pathway isoprenoid biosynthesis; farnesyl diphosphate biosynthesis; farnesyl diphosphate from geranyl diphosphate and isopentenyl diphosphate: step 1/1. The protein operates within sesquiterpene biosynthesis. Its pathway is isoprenoid biosynthesis; geranyl diphosphate biosynthesis; geranyl diphosphate from dimethylallyl diphosphate and isopentenyl diphosphate: step 1/1. Its function is as follows. Catalyzes the sequential condensation of isopentenyl pyrophosphate with the allylic pyrophosphates, dimethylallyl pyrophosphate, and then with the resultant geranylpyrophosphate to the ultimate product farnesyl pyrophosphate. The sequence is that of Farnesyl pyrophosphate synthase 1 from Cannabis sativa (Hemp).